Here is a 600-residue protein sequence, read N- to C-terminus: Jacalin-related lectin 18 (600 aa).

4 Jacalin-type lectin domains span residues 12–158 (TQRL…YFTC), 161–303 (PTRM…YFTT), 304–447 (SPFI…YFRL), and 454–597 (GEKV…HVLP).

Belongs to the jacalin lectin family.

The sequence is that of Jacalin-related lectin 18 (JAL18) from Arabidopsis thaliana (Mouse-ear cress).